The sequence spans 272 residues: HTH-type transcriptional repressor AllR (272 aa).

The interval 1–20 (MTEVRRRGRPGQQEPSAQKG) is disordered. In terms of domain architecture, HTH iclR-type spans 21–83 (AQALERGIAI…SQLGWWHIGL (63 aa)). Positions 43–62 (VSDISLNLDLPLSTTFRLLK) form a DNA-binding region, H-T-H motif. The IclR-ED domain maps to 98-267 (VLSVGGPFMR…ARNISTALGL (170 aa)). Glyoxylate contacts are provided by residues 154–156 (SGA), Asp-207, Cys-217, and 234–236 (SIS).

In terms of biological role, negative regulator of allantoin and glyoxylate utilization operons. Binds to the gcl promoter and to the allS-allA intergenic region. In Klebsiella pneumoniae, this protein is HTH-type transcriptional repressor AllR (allR).